A 166-amino-acid polypeptide reads, in one-letter code: Small ribosomal subunit protein uS5 (166 aa).

Residues 11-74 (LQEKLIAVNR…EKARRNMINV (64 aa)) form the S5 DRBM domain.

This sequence belongs to the universal ribosomal protein uS5 family. Part of the 30S ribosomal subunit. Contacts proteins S4 and S8.

With S4 and S12 plays an important role in translational accuracy. Its function is as follows. Located at the back of the 30S subunit body where it stabilizes the conformation of the head with respect to the body. The sequence is that of Small ribosomal subunit protein uS5 from Haemophilus ducreyi (strain 35000HP / ATCC 700724).